The following is a 410-amino-acid chain: MTVAPSAALSAAARPDARGRFGRFGGKYVPETLMPALSELEAAFAHYRQDPDFQAELQQLLRDYVGRPSPLYFAERLSAHYAHDQVQPQIYLKREDLNHTGAHKINNALGQVLLAKRMGKQRIIAETGAGQHGVATATVCARFGLQCVIYMGVQDMERQRLNVLRMRLLGAEVAPVSAGTGTLKDATSEAIRDWVTNVETTHYILGSVAGPHPYPMLVREFHAVIGAETRQQCLEKWGGLPDILLACVGGGSNAMGLFHEFVEEPQVRLIGVEAAGQGLDTGHHAATLTKGEVGVLHGAMSYLLQDADGQVVEAHSISAGLDYPGVGPEHSYLKDIGRAEYYSVTDTEAVAACVRLAQLEGILPALETAHALAYLETLCPQLTGQPRIVINCSGRGDKDVETIGRYFEAQ.

Position 104 is an N6-(pyridoxal phosphate)lysine (Lys104).

This sequence belongs to the TrpB family. Tetramer of two alpha and two beta chains. Requires pyridoxal 5'-phosphate as cofactor.

It catalyses the reaction (1S,2R)-1-C-(indol-3-yl)glycerol 3-phosphate + L-serine = D-glyceraldehyde 3-phosphate + L-tryptophan + H2O. It functions in the pathway amino-acid biosynthesis; L-tryptophan biosynthesis; L-tryptophan from chorismate: step 5/5. In terms of biological role, the beta subunit is responsible for the synthesis of L-tryptophan from indole and L-serine. In Thermosynechococcus vestitus (strain NIES-2133 / IAM M-273 / BP-1), this protein is Tryptophan synthase beta chain.